A 448-amino-acid chain; its full sequence is Homogentisate 1,2-dioxygenase (448 aa).

Residues 1 to 26 (MNMLAPAAKNAFTPASPDRPAYQSGF) form a disordered region. Histidine 302 functions as the Proton acceptor in the catalytic mechanism. Positions 345 and 351 each coordinate Fe cation. Homogentisate contacts are provided by tyrosine 360 and histidine 381. Residue histidine 381 participates in Fe cation binding.

The protein belongs to the homogentisate dioxygenase family. In terms of assembly, hexamer; dimer of trimers. Fe cation is required as a cofactor.

It catalyses the reaction homogentisate + O2 = 4-maleylacetoacetate + H(+). It participates in amino-acid degradation; L-phenylalanine degradation; acetoacetate and fumarate from L-phenylalanine: step 4/6. In terms of biological role, involved in the catabolism of homogentisate (2,5-dihydroxyphenylacetate or 2,5-OH-PhAc), a central intermediate in the degradation of phenylalanine and tyrosine. Catalyzes the oxidative ring cleavage of the aromatic ring of homogentisate to yield maleylacetoacetate. In Ralstonia nicotianae (strain ATCC BAA-1114 / GMI1000) (Ralstonia solanacearum), this protein is Homogentisate 1,2-dioxygenase.